The chain runs to 133 residues: Small ribosomal subunit protein bS18 (133 aa).

The interval 1-63 is disordered; it reads MARPDMGGPK…GDEGGGRRGF (63 aa). Gly residues predominate over residues 9 to 39; that stretch reads PKTGGFGGPRSGGFGGGGGGGFGGGGFGGGR. Basic and acidic residues predominate over residues 40–59; the sequence is GGDRGDRGDRDDRGGDEGGG.

Belongs to the bacterial ribosomal protein bS18 family. In terms of assembly, part of the 30S ribosomal subunit. Forms a tight heterodimer with protein bS6.

Its function is as follows. Binds as a heterodimer with protein bS6 to the central domain of the 16S rRNA, where it helps stabilize the platform of the 30S subunit. The sequence is that of Small ribosomal subunit protein bS18 from Anaeromyxobacter dehalogenans (strain 2CP-1 / ATCC BAA-258).